The primary structure comprises 365 residues: Protein mab-21-like (365 aa).

This sequence belongs to the mab-21 family.

The chain is Protein mab-21-like from Anopheles gambiae (African malaria mosquito).